The following is a 459-amino-acid chain: NADH-ubiquinone oxidoreductase chain 4 (459 aa).

13 consecutive transmembrane segments (helical) span residues His-22–Leu-42, Pro-61–Ser-81, Arg-94–Ala-113, Leu-114–Ile-134, Ala-146–Thr-166, Trp-197–Leu-217, Pro-225–Ile-245, Leu-258–Leu-278, Ser-285–Leu-304, Leu-308–Leu-330, Leu-352–Pro-372, Leu-380–Gly-400, and Leu-437–Thr-457.

This sequence belongs to the complex I subunit 4 family.

Its subcellular location is the mitochondrion membrane. It catalyses the reaction a ubiquinone + NADH + 5 H(+)(in) = a ubiquinol + NAD(+) + 4 H(+)(out). Core subunit of the mitochondrial membrane respiratory chain NADH dehydrogenase (Complex I) that is believed to belong to the minimal assembly required for catalysis. Complex I functions in the transfer of electrons from NADH to the respiratory chain. The immediate electron acceptor for the enzyme is believed to be ubiquinone. The polypeptide is NADH-ubiquinone oxidoreductase chain 4 (MT-ND4) (Pelomedusa subrufa (African side-necked turtle)).